A 721-amino-acid polypeptide reads, in one-letter code: MKYDIKIDLKNKNEEYSFGEVAKQANGAAWLKSGNTVILATVVIDETEIVKDDFLPLTVQYIEKAYAAGKIPGGFFKRETKASDFETLTSRIVDRSLRPLFPKGFGHPTQITIMVFSVDKESDLQVLALNAASAALYVSDIDINKSVSAIRVAKIDGELILNPTLSELDKSTLDLYLSGTKEDLLMIEMRSKGGIKVDTNLMIDPLMDPTLSSAIIATHVSNAVPEDELITILAKAEELLFETNAMYEEMFKEFKKETSPLECKAHALNEEMLKYVRSNHYSDIKSAMNQMAKSERSTALRQLRKKIIITKEEWDEVELKDVIESVKKEQVRGQILNDRVRADGRALNEIRPISISTNVLPSAHASCLFTRGQTQALVVLTMGGPKDAQMFENLTDEGTQNENFMVHYNFPGFSVGEASPIMGTKRRELGHGNLAKRALEPIVNLEGQTVRLVSEILESNGSSSMATVCGGYMALRAADIETSDTIAGIAMGMVSEGDKYAILSDIMGLEDHDGDLDFKVTGSKDGITAMQMDIKLGGISLNILKEALYQAKEGRAHIINIMQEAEKNISFNDGVLPSTDFFHINPSFIGDIIGQAGKTIREIIEKFEVAIDIDKKDGKVKVTGKSKSGVQAAREHIEGIVSTPKMPKIEYKVGDIHKGIVKKIVEFGAFIELPDGVDGLLHISKISDQRVEKVSDILKEGEEINVEILEFKGNKISLGIA.

Positions 511 and 517 each coordinate Mg(2+). The 61-residue stretch at 577 to 637 folds into the KH domain; that stretch reads PSTDFFHINP…SGVQAAREHI (61 aa). The S1 motif domain maps to 654-721; it reads GDIHKGIVKK…KGNKISLGIA (68 aa).

The protein belongs to the polyribonucleotide nucleotidyltransferase family. The cofactor is Mg(2+).

It is found in the cytoplasm. The catalysed reaction is RNA(n+1) + phosphate = RNA(n) + a ribonucleoside 5'-diphosphate. Functionally, involved in mRNA degradation. Catalyzes the phosphorolysis of single-stranded polyribonucleotides processively in the 3'- to 5'-direction. The protein is Polyribonucleotide nucleotidyltransferase of Sulfurimonas denitrificans (strain ATCC 33889 / DSM 1251) (Thiomicrospira denitrificans (strain ATCC 33889 / DSM 1251)).